The following is a 57-amino-acid chain: UPF0391 membrane protein RPB_2024 (57 aa).

2 consecutive transmembrane segments (helical) span residues 4–24 (WVVT…GGIA) and 30–50 (IAKV…VVGL).

This sequence belongs to the UPF0391 family.

The protein resides in the cell membrane. This Rhodopseudomonas palustris (strain HaA2) protein is UPF0391 membrane protein RPB_2024.